The chain runs to 729 residues: Fatty acid oxidation complex subunit alpha (729 aa).

An enoyl-CoA hydratase/isomerase region spans residues 1–189 (MLYKGDTLYL…KIGLVDGVVK (189 aa)). D296 is a substrate binding site. The tract at residues 311–729 (ETPKQAAVLG…ARPVGDLKTA (419 aa)) is 3-hydroxyacyl-CoA dehydrogenase. NAD(+)-binding positions include M324, D343, 400 to 402 (VVE), K407, and S429. The active-site For 3-hydroxyacyl-CoA dehydrogenase activity is the H450. N453 lines the NAD(+) pocket. Residues N500 and Y660 each contribute to the substrate site. Positions 708 to 729 (RHNEPYYPPVEPARPVGDLKTA) are disordered.

In the N-terminal section; belongs to the enoyl-CoA hydratase/isomerase family. This sequence in the C-terminal section; belongs to the 3-hydroxyacyl-CoA dehydrogenase family. In terms of assembly, heterotetramer of two alpha chains (FadB) and two beta chains (FadA).

The catalysed reaction is a (3S)-3-hydroxyacyl-CoA + NAD(+) = a 3-oxoacyl-CoA + NADH + H(+). It catalyses the reaction a (3S)-3-hydroxyacyl-CoA = a (2E)-enoyl-CoA + H2O. The enzyme catalyses a 4-saturated-(3S)-3-hydroxyacyl-CoA = a (3E)-enoyl-CoA + H2O. It carries out the reaction (3S)-3-hydroxybutanoyl-CoA = (3R)-3-hydroxybutanoyl-CoA. The catalysed reaction is a (3Z)-enoyl-CoA = a 4-saturated (2E)-enoyl-CoA. It catalyses the reaction a (3E)-enoyl-CoA = a 4-saturated (2E)-enoyl-CoA. Its pathway is lipid metabolism; fatty acid beta-oxidation. Its function is as follows. Involved in the aerobic and anaerobic degradation of long-chain fatty acids via beta-oxidation cycle. Catalyzes the formation of 3-oxoacyl-CoA from enoyl-CoA via L-3-hydroxyacyl-CoA. It can also use D-3-hydroxyacyl-CoA and cis-3-enoyl-CoA as substrate. In Shigella flexneri serotype 5b (strain 8401), this protein is Fatty acid oxidation complex subunit alpha.